Consider the following 94-residue polypeptide: uncharacterized protein (94 aa).

This is an uncharacterized protein from Schizosaccharomyces pombe (strain 972 / ATCC 24843) (Fission yeast).